The chain runs to 360 residues: Phenylalanine--tRNA ligase alpha subunit (360 aa).

Residue Glu260 participates in Mg(2+) binding.

The protein belongs to the class-II aminoacyl-tRNA synthetase family. Phe-tRNA synthetase alpha subunit type 1 subfamily. As to quaternary structure, tetramer of two alpha and two beta subunits. It depends on Mg(2+) as a cofactor.

The protein localises to the cytoplasm. The enzyme catalyses tRNA(Phe) + L-phenylalanine + ATP = L-phenylalanyl-tRNA(Phe) + AMP + diphosphate + H(+). This Afipia carboxidovorans (strain ATCC 49405 / DSM 1227 / KCTC 32145 / OM5) (Oligotropha carboxidovorans) protein is Phenylalanine--tRNA ligase alpha subunit.